The following is a 202-amino-acid chain: Probable GTP-binding protein EngB (202 aa).

The EngB-type G domain occupies 26-200; sequence VSKEIAFTGS…KAQLDSWFSI (175 aa). Residues 34–41, 61–65, 79–82, 146–149, and 179–181 contribute to the GTP site; these read GSSNVGKS, GSTKT, DLPG, NKAD, and FSS. Positions 41 and 63 each coordinate Mg(2+).

The protein belongs to the TRAFAC class TrmE-Era-EngA-EngB-Septin-like GTPase superfamily. EngB GTPase family. It depends on Mg(2+) as a cofactor.

Functionally, necessary for normal cell division and for the maintenance of normal septation. The chain is Probable GTP-binding protein EngB from Baumannia cicadellinicola subsp. Homalodisca coagulata.